Consider the following 146-residue polypeptide: Hemoglobin subunit beta (146 aa).

Val-1 carries the post-translational modification N-acetylvaline. The Globin domain occupies 2–146 (HLTAEEKSLV…VANALAHKYH (145 aa)). The residue at position 12 (Thr-12) is a Phosphothreonine. A Phosphoserine modification is found at Ser-44. At Lys-59 the chain carries N6-acetyllysine. His-63 lines the heme b pocket. An N6-acetyllysine modification is found at Lys-82. His-92 lines the heme b pocket. Cys-93 carries the post-translational modification S-nitrosocysteine. Lys-144 carries the post-translational modification N6-acetyllysine.

The protein belongs to the globin family. In terms of assembly, heterotetramer of two alpha chains and two beta chains. Red blood cells.

Its function is as follows. Involved in oxygen transport from the lung to the various peripheral tissues. In Vulpes vulpes (Red fox), this protein is Hemoglobin subunit beta (HBB).